Here is a 269-residue protein sequence, read N- to C-terminus: Eukaryotic translation initiation factor 3 subunit G-1 (269 aa).

The 79-residue stretch at 188–266 (AAIRISNLSE…LILSVEWSKP (79 aa)) folds into the RRM domain.

This sequence belongs to the eIF-3 subunit G family. In terms of assembly, component of the eukaryotic translation initiation factor 3 (eIF-3) complex. The eIF-3 complex interacts with pix.

It localises to the cytoplasm. Functionally, RNA-binding component of the eukaryotic translation initiation factor 3 (eIF-3) complex, which is involved in protein synthesis of a specialized repertoire of mRNAs and, together with other initiation factors, stimulates binding of mRNA and methionyl-tRNAi to the 40S ribosome. The eIF-3 complex specifically targets and initiates translation of a subset of mRNAs involved in cell proliferation. This subunit can bind 18S rRNA. The protein is Eukaryotic translation initiation factor 3 subunit G-1 of Drosophila erecta (Fruit fly).